An 893-amino-acid polypeptide reads, in one-letter code: Protein FAM186B (893 aa).

Disordered stretches follow at residues 177 to 207 (GWQGRSPQTSPSHPQPLSPEQMLQDQHTMNT), 327 to 376 (QAED…PSPM), 537 to 557 (LEKEQESPRREPEQLGEDVER), 574 to 611 (LSLVPAPSRTQSAHQSRRPHLPMSPSTQQPALGKQRPM), and 806 to 827 (KPKKCKLPAASPRHIRPSGPTY). 2 stretches are compositionally biased toward polar residues: residues 179–188 (QGRSPQTSPS) and 197–207 (QMLQDQHTMNT). Residues 303–331 (RYHDLLLMKQALEFQLKKAQNATGQAEDL) are a coiled coil. Basic and acidic residues predominate over residues 342–353 (SERETLPRKETV).

This sequence belongs to the FAM186 family.

The sequence is that of Protein FAM186B (FAM186B) from Homo sapiens (Human).